A 304-amino-acid polypeptide reads, in one-letter code: Recombination-associated protein RdgC (304 aa).

It belongs to the RdgC family.

It is found in the cytoplasm. Its subcellular location is the nucleoid. May be involved in recombination. This chain is Recombination-associated protein RdgC, found in Dechloromonas aromatica (strain RCB).